The chain runs to 313 residues: tRNA-cytidine(32) 2-sulfurtransferase (313 aa).

The PP-loop motif motif lies at 47 to 52; the sequence is SGGKDS. [4Fe-4S] cluster is bound by residues Cys122, Cys125, and Cys213.

It belongs to the TtcA family. As to quaternary structure, homodimer. The cofactor is Mg(2+). Requires [4Fe-4S] cluster as cofactor.

It is found in the cytoplasm. The catalysed reaction is cytidine(32) in tRNA + S-sulfanyl-L-cysteinyl-[cysteine desulfurase] + AH2 + ATP = 2-thiocytidine(32) in tRNA + L-cysteinyl-[cysteine desulfurase] + A + AMP + diphosphate + H(+). Its pathway is tRNA modification. Its function is as follows. Catalyzes the ATP-dependent 2-thiolation of cytidine in position 32 of tRNA, to form 2-thiocytidine (s(2)C32). The sulfur atoms are provided by the cysteine/cysteine desulfurase (IscS) system. This Yersinia enterocolitica serotype O:8 / biotype 1B (strain NCTC 13174 / 8081) protein is tRNA-cytidine(32) 2-sulfurtransferase.